The chain runs to 400 residues: tRNA-specific adenosine deaminase 1 (400 aa).

The A to I editase domain occupies 76 to 400 (SIATGVKALP…WIPTRTDDVK (325 aa)). Histidine 101 is a binding site for Zn(2+). Glutamate 103 (proton donor) is an active-site residue. Arginine 108 provides a ligand contact to 1D-myo-inositol hexakisphosphate. Zn(2+) is bound by residues cysteine 157 and cysteine 223. Lysine 226, arginine 232, lysine 369, and arginine 375 together coordinate 1D-myo-inositol hexakisphosphate.

Belongs to the ADAT1 family. 1D-myo-inositol hexakisphosphate serves as cofactor. It depends on Zn(2+) as a cofactor.

It carries out the reaction adenosine(37) in tRNA(Ala) + H2O + H(+) = inosine(37) in tRNA(Ala) + NH4(+). In terms of biological role, deaminates adenosine-37 to inosine in tRNA-Ala. This is tRNA-specific adenosine deaminase 1 (TAD1) from Saccharomyces cerevisiae (strain ATCC 204508 / S288c) (Baker's yeast).